A 377-amino-acid polypeptide reads, in one-letter code: CaM kinase-like vesicle-associated protein (377 aa).

The region spanning 24-287 is the Protein kinase domain; the sequence is YDLGQLIKTE…AADAISHEWI (264 aa). The interval 324-377 is disordered; that stretch reads MKRLRAPEQTDPGTPSPSKDSDKTPSMATPAPSPANTPAEGAPSLPCPSPDTTG. A compositionally biased stretch (low complexity) spans 347 to 362; sequence TPSMATPAPSPANTPA. The span at 368 to 377 shows a compositional bias: pro residues; it reads LPCPSPDTTG.

Belongs to the protein kinase superfamily. CAMK Ser/Thr protein kinase family. As to quaternary structure, interacts with calmodulin, in the presence of calcium. Requires Ca(2+) as cofactor.

It is found in the cytoplasmic vesicle membrane. Functionally, does not appear to have detectable kinase activity. The chain is CaM kinase-like vesicle-associated protein (camkv) from Xenopus laevis (African clawed frog).